The chain runs to 76 residues: Protein sigN132 (76 aa).

The segment covering 1 to 13 (MLFESISTLSNLK) has biased composition (polar residues). Residues 1-33 (MLFESISTLSNLKSASKSSMIASTGSTSSKSSN) form a disordered region. The segment covering 14 to 33 (SASKSSMIASTGSTSSKSSN) has biased composition (low complexity).

The sequence is that of Protein sigN132 from Dictyostelium discoideum (Social amoeba).